Consider the following 493-residue polypeptide: Growth-regulating factor 8 (493 aa).

The QLQ domain occupies 149–184 (AFSEAQWHELERQRNIYKYMMASVPVPPELLTPFPK). One can recognise a WRC domain in the interval 243-287 (DLEPWRCKRTDGKKWRCSRNVIPDQKYCERHTHKSRPRSRKHVES). 2 consecutive short sequence motifs (bipartite nuclear localization signal) follow at residues 248–258 (RCKRTDGKKWR) and 276–283 (KSRPRSRK). The segment at 270–302 (CERHTHKSRPRSRKHVESSHQSSHHNDIRTAKN) is disordered. Positions 273–283 (HTHKSRPRSRK) are enriched in basic residues.

The protein belongs to the GRF family. Predominantly expressed in shoot tips and flowers.

The protein resides in the nucleus. Functionally, transcription activator that plays a role in the regulation of cell expansion in leaf and cotyledons tissues. Component of a network formed by miR396, the GRFs and their interacting factors (GIFs) acting in the regulation of meristem function, at least partially through the control of cell proliferation. In Arabidopsis thaliana (Mouse-ear cress), this protein is Growth-regulating factor 8 (GRF8).